Consider the following 366-residue polypeptide: Phospho-N-acetylmuramoyl-pentapeptide-transferase (366 aa).

A run of 10 helical transmembrane segments spans residues 27-47, 71-91, 93-113, 134-154, 174-194, 205-225, 245-265, 268-288, 294-314, and 343-363; these read AALF…INSL, TPTM…LLWA, LSNV…AIGF, LGIE…TALA, FLIN…VGAG, GLAI…AYLA, LAVV…FNAP, AIFM…TVAV, IVMA…IIQV, and QVVI…LSTL.

The protein belongs to the glycosyltransferase 4 family. MraY subfamily. Requires Mg(2+) as cofactor.

The protein resides in the cell inner membrane. It catalyses the reaction UDP-N-acetyl-alpha-D-muramoyl-L-alanyl-gamma-D-glutamyl-meso-2,6-diaminopimeloyl-D-alanyl-D-alanine + di-trans,octa-cis-undecaprenyl phosphate = di-trans,octa-cis-undecaprenyl diphospho-N-acetyl-alpha-D-muramoyl-L-alanyl-D-glutamyl-meso-2,6-diaminopimeloyl-D-alanyl-D-alanine + UMP. Its pathway is cell wall biogenesis; peptidoglycan biosynthesis. Catalyzes the initial step of the lipid cycle reactions in the biosynthesis of the cell wall peptidoglycan: transfers peptidoglycan precursor phospho-MurNAc-pentapeptide from UDP-MurNAc-pentapeptide onto the lipid carrier undecaprenyl phosphate, yielding undecaprenyl-pyrophosphoryl-MurNAc-pentapeptide, known as lipid I. This is Phospho-N-acetylmuramoyl-pentapeptide-transferase from Rhizobium etli (strain CIAT 652).